The primary structure comprises 601 residues: Elongation factor 4 (601 aa).

One can recognise a tr-type G domain in the interval 6–188; the sequence is AHIRNFSIIA…QIVRKVPPPK (183 aa). GTP contacts are provided by residues 18–23 and 135–138; these read DHGKST and NKVD.

It belongs to the TRAFAC class translation factor GTPase superfamily. Classic translation factor GTPase family. LepA subfamily.

The protein localises to the cell inner membrane. It carries out the reaction GTP + H2O = GDP + phosphate + H(+). Required for accurate and efficient protein synthesis under certain stress conditions. May act as a fidelity factor of the translation reaction, by catalyzing a one-codon backward translocation of tRNAs on improperly translocated ribosomes. Back-translocation proceeds from a post-translocation (POST) complex to a pre-translocation (PRE) complex, thus giving elongation factor G a second chance to translocate the tRNAs correctly. Binds to ribosomes in a GTP-dependent manner. The chain is Elongation factor 4 from Anaeromyxobacter sp. (strain Fw109-5).